The chain runs to 164 residues: Transcriptional regulator MraZ (164 aa).

2 SpoVT-AbrB domains span residues 7–63 (REQH…EPAV) and 92–135 (LDQL…NPDR).

The protein belongs to the MraZ family. In terms of assembly, forms oligomers.

The protein resides in the cytoplasm. It localises to the nucleoid. This chain is Transcriptional regulator MraZ, found in Chlorobaculum parvum (strain DSM 263 / NCIMB 8327) (Chlorobium vibrioforme subsp. thiosulfatophilum).